The primary structure comprises 127 residues: Small ribosomal subunit protein uS11 (127 aa).

The protein belongs to the universal ribosomal protein uS11 family. As to quaternary structure, part of the 30S ribosomal subunit. Interacts with proteins S7 and S18. Binds to IF-3.

Its function is as follows. Located on the platform of the 30S subunit, it bridges several disparate RNA helices of the 16S rRNA. Forms part of the Shine-Dalgarno cleft in the 70S ribosome. In Rickettsia canadensis (strain McKiel), this protein is Small ribosomal subunit protein uS11.